A 767-amino-acid chain; its full sequence is Probable ubiquitin carboxyl-terminal hydrolase creB (767 aa).

The region spanning 49–462 is the USP domain; sequence YGMENYGNTC…CAYVLFYQET (414 aa). Cys58 functions as the Nucleophile in the catalytic mechanism. Disordered stretches follow at residues 107–140 and 232–263; these read EAEAQAEKQKAANAQRPGMPPNPQQKPEDKDSPE and ASKQPPIEKSLPAPETADSVDQSSSTGSKTPN. Polar residues predominate over residues 250-263; it reads SVDQSSSTGSKTPN. The active-site Proton acceptor is His413. A disordered region spans residues 490-767; sequence LKQNGFPQSP…LRKKSFSILS (278 aa). Composition is skewed to low complexity over residues 540-554 and 564-573; these read ESAPFSPLSPLSPLS and ERVTTVATPP. The stretch at 574–641 forms a coiled coil; it reads KNDALAKKER…ASKAEEDRRL (68 aa). The segment covering 577 to 650 has biased composition (basic and acidic residues); the sequence is ALAKKERARE…LSHENGKEKQ (74 aa). Over residues 656–667 the composition is skewed to basic residues; that stretch reads RLKRGSKSLSHR. The span at 690 to 700 shows a compositional bias: polar residues; that stretch reads STLSQTGPTSE. Positions 701–713 are enriched in low complexity; the sequence is QQQQQQQQQQQQQ. Basic and acidic residues predominate over residues 731-749; it reads TIREDEQVNHKDSKHERTG. Residues 750-767 show a composition bias toward basic residues; that stretch reads HGKWRSFSLRKKSFSILS.

This sequence belongs to the peptidase C19 family. As to quaternary structure, interacts with creA, creC and qutD.

The catalysed reaction is Thiol-dependent hydrolysis of ester, thioester, amide, peptide and isopeptide bonds formed by the C-terminal Gly of ubiquitin (a 76-residue protein attached to proteins as an intracellular targeting signal).. Functionally, ubiquitin thioesterase component of the regulatory network controlling carbon source utilization through ubiquitination and deubiquitination involving creA, creB, creC, creD and acrB. Deubiquitinates the creA catabolic repressor and the quinate permease qutD. Also plays a role in response to carbon starvation and the control of extracellular proteases activity. The chain is Probable ubiquitin carboxyl-terminal hydrolase creB (creB) from Aspergillus fumigatus (strain CBS 144.89 / FGSC A1163 / CEA10) (Neosartorya fumigata).